A 229-amino-acid chain; its full sequence is UPF0758 protein Ppro_3582 (229 aa).

A disordered region spans residues methionine 1 to arginine 20. Positions glutamate 7–leucine 19 are enriched in basic and acidic residues. The MPN domain occupies arginine 107 to leucine 229. 3 residues coordinate Zn(2+): histidine 178, histidine 180, and aspartate 191. The JAMM motif signature appears at histidine 178–aspartate 191.

The protein belongs to the UPF0758 family.

In Pelobacter propionicus (strain DSM 2379 / NBRC 103807 / OttBd1), this protein is UPF0758 protein Ppro_3582.